A 583-amino-acid chain; its full sequence is Sphingomyelin phosphodiesterase A (583 aa).

Positions Met1–Ser21 are cleaved as a signal peptide. Residues Ile51–Gly133 enclose the Saposin B-type domain. 3 disulfides stabilise this stretch: Cys55–Cys129, Cys58–Cys123, and Cys86–Cys97. Asn72 is a glycosylation site (N-linked (GlcNAc...) asparagine). An N-linked (GlcNAc...) asparagine glycan is attached at Asn182. Residues Asp193 and His195 each contribute to the Zn(2+) site. A disulfide bridge links Cys214 with Cys229. Zn(2+) contacts are provided by Asp258 and Asn298. Asn377 carries an N-linked (GlcNAc...) asparagine glycan. Residues His401, His436, and His438 each coordinate Zn(2+). N-linked (GlcNAc...) asparagine glycosylation is found at Asn495, Asn500, Asn537, and Asn547. A disulfide bridge connects residues Cys567 and Cys580.

The protein belongs to the acid sphingomyelinase family. Zn(2+) serves as cofactor.

The protein resides in the secreted. In terms of biological role, converts sphingomyelin to ceramide. The sequence is that of Sphingomyelin phosphodiesterase A (sgmA) from Dictyostelium discoideum (Social amoeba).